Reading from the N-terminus, the 358-residue chain is DNA polymerase IV (358 aa).

A UmuC domain is found at 6–187 (IIHIDMDYFF…LDIGDFPGVG (182 aa)). Positions 10 and 105 each coordinate Mg(2+). Glutamate 106 is a catalytic residue.

This sequence belongs to the DNA polymerase type-Y family. Monomer. Requires Mg(2+) as cofactor.

It is found in the cytoplasm. The catalysed reaction is DNA(n) + a 2'-deoxyribonucleoside 5'-triphosphate = DNA(n+1) + diphosphate. Poorly processive, error-prone DNA polymerase involved in untargeted mutagenesis. Copies undamaged DNA at stalled replication forks, which arise in vivo from mismatched or misaligned primer ends. These misaligned primers can be extended by PolIV. Exhibits no 3'-5' exonuclease (proofreading) activity. May be involved in translesional synthesis, in conjunction with the beta clamp from PolIII. In Staphylococcus haemolyticus (strain JCSC1435), this protein is DNA polymerase IV.